The primary structure comprises 234 residues: MSRAALDKDPRDVASMFDGVARKYDLTNTVLSLGQDRYWRRATRSALRIGPGQKVLDLAAGTAVSTVELTKSGAWCVAADFSVGMLAAGAARKVPKVAGDATRLPFGDDVFDAVTISFGLRNVANQQAALREMARVTRPGGRLLVCEFSTPTNALFATAYKEYLMRALPRVARAVSSNPEAYEYLAESIRAWPDQAVLAHQISRAGWSGVRWRNLTGGIVALHAGYKPGKQTPQ.

S-adenosyl-L-methionine contacts are provided by residues T62, D80, 100-101, and S117; that span reads DA.

The protein belongs to the class I-like SAM-binding methyltransferase superfamily. MenG/UbiE family.

It catalyses the reaction a 2-demethylmenaquinol + S-adenosyl-L-methionine = a menaquinol + S-adenosyl-L-homocysteine + H(+). It participates in quinol/quinone metabolism; menaquinone biosynthesis; menaquinol from 1,4-dihydroxy-2-naphthoate: step 2/2. Functionally, methyltransferase required for the conversion of demethylmenaquinol (DMKH2) to menaquinol (MKH2). The chain is Demethylmenaquinone methyltransferase from Mycobacterium bovis (strain ATCC BAA-935 / AF2122/97).